Here is a 149-residue protein sequence, read N- to C-terminus: Large ribosomal subunit protein bL9 (149 aa).

This sequence belongs to the bacterial ribosomal protein bL9 family.

Its function is as follows. Binds to the 23S rRNA. The chain is Large ribosomal subunit protein bL9 from Leptospira borgpetersenii serovar Hardjo-bovis (strain JB197).